The sequence spans 255 residues: Flap endonuclease Xni (255 aa).

Aspartate 105 is a binding site for Mg(2+). Residues 162-254 (EHKQFIDYLA…LKQFRLPKAN (93 aa)) form the 5'-3' exonuclease domain. Residues leucine 172, alanine 173, proline 181, valine 183, and isoleucine 186 each coordinate K(+). The interval 185–190 (GIGPKS) is interaction with DNA.

Belongs to the Xni family. Mg(2+) serves as cofactor. K(+) is required as a cofactor.

Functionally, has flap endonuclease activity. During DNA replication, flap endonucleases cleave the 5'-overhanging flap structure that is generated by displacement synthesis when DNA polymerase encounters the 5'-end of a downstream Okazaki fragment. The sequence is that of Flap endonuclease Xni from Shewanella piezotolerans (strain WP3 / JCM 13877).